A 1576-amino-acid chain; its full sequence is DExH-box ATP-dependent RNA helicase DExH2 (1576 aa).

Residues glutamate 15–aspartate 78 form the R3H domain. Residues isoleucine 227–proline 396 form the Helicase ATP-binding domain. ATP is bound at residue glycine 240–threonine 247. The DEIH box signature appears at aspartate 343–histidine 346. The region spanning leucine 561–aspartate 735 is the Helicase C-terminal domain. Disordered stretches follow at residues alanine 1137 to lysine 1165, methionine 1177 to asparagine 1223, and aspartate 1260 to glutamine 1576. Over residues proline 1281 to alanine 1301 the composition is skewed to polar residues. A compositionally biased stretch (basic and acidic residues) spans lysine 1305 to serine 1319. Residues lysine 1349–lysine 1360 carry the PH1 motif. A compositionally biased stretch (basic residues) spans glutamate 1352 to serine 1363. A compositionally biased stretch (polar residues) spans alanine 1381–asparagine 1412. The short motif at lysine 1454 to lysine 1465 is the PH2 element. Basic residues predominate over residues glutamine 1455 to lysine 1467. Positions glutamate 1490–serine 1508 are enriched in basic and acidic residues. Positions isoleucine 1509 to threonine 1524 are enriched in polar residues. A compositionally biased stretch (basic residues) spans lysine 1528–leucine 1537. A Nuclear localization signal motif is present at residues proline 1530–leucine 1537. Over residues asparagine 1540–lysine 1562 the composition is skewed to polar residues.

It belongs to the DExH box helicase family. As to quaternary structure, homodimer.

It is found in the nucleus. The enzyme catalyses ATP + H2O = ADP + phosphate + H(+). May function as an ATP-dependent RNA/DNA helicase. Binds DNA in vitro in a non-specific manner. This is DExH-box ATP-dependent RNA helicase DExH2 from Arabidopsis thaliana (Mouse-ear cress).